Consider the following 716-residue polypeptide: MNFRQEKFVRFQDWKSDKTSSDVEYSGKNEIQTGIFQRTISSISDKFYRSFESSSARIKLFKRSYKSYSFKEAVSKGIGSTHKILDPQGPFLQRWNKIFVLACIIAVSLDPLFFYVPIIDDAKKCLGIDKKMEITASVLRSFTDVFYVLHIIFQFRTGFIAPSSRVFGRGVLVEDKREIAKRYLSSHFIIDILAVLPLPQMVILIIIPHMRGSSSLNTKNMLKFIVFFQYIPRFIRIYPLYKEVTRTSGILTETAWAGAAFNLFLYMLASHVFGAFWYLFSIERETVCWKQACERNNPPCISKLLYCDPETAGGNAFLNESCPIQTPNTTLFDFGIFLDALQSGVVESQDFPQKFFYCFWWGLQNLSSLGQNLKTSTYIWEICFAVFISIAGLVLFSFLIGNMQTYLQSTTTRLEEMRVKRRDAEQWMSHRLLPENLRKRIRRYEQYKWQETRGVDEENLLSNLPKDLRRDIKRHLCLALLMRVPMFEKMDEQLLDALCDRLQPVLYTEESYIVREGDPVDEMLFIMRGKLLTITTNGGRTGFLNSEYLGAGDFCGEELLTWALDPHSSSNLPISTRTVRALMEVEAFALKADDLKFVASQFRRLHSKQLRHTFRYYSQQWKTWAACFIQAAWRRYIKKKLEESLKEEENRLQDALAKEACGSSPSLGATIYASRFAANILRTIRRSGSVRKPRMPERMPPMLLQKPAEPDFNSDD.

Topologically, residues M1 to K97 are cytoplasmic. The chain crosses the membrane as a helical span at residues I98–I118. Topologically, residues I119–M132 are extracellular. A helical membrane pass occupies residues E133–F153. Residues Q154 to H187 lie on the Cytoplasmic side of the membrane. Residues F188–P208 traverse the membrane as a helical segment. At H209–N220 the chain is on the extracellular side. Residues M221–Y241 traverse the membrane as a helical segment. Residues K242 to A259 lie on the Cytoplasmic side of the membrane. The helical transmembrane segment at A260–F280 threads the bilayer. The Extracellular segment spans residues S281–I379. A helical transmembrane segment spans residues W380–I400. Residues G401–D716 lie on the Cytoplasmic side of the membrane. Residues M486–L610 and E557 contribute to the a nucleoside 3',5'-cyclic phosphate site. A calmodulin-binding region spans residues F602–Y617. One can recognise an IQ domain in the interval K622–R651. A disordered region spans residues S689–D716.

It belongs to the cyclic nucleotide-gated cation channel (TC 1.A.1.5) family. As to quaternary structure, homotetramer or heterotetramer (Potential). Binds calmodulin-2/3/5 with a higher affinity than calmodulin-1/4. Expressed in the whole plant but only weakly in roots.

The protein localises to the cell membrane. Its function is as follows. Acts as a cyclic nucleotide-gated ion channel. Can be activated by cyclic AMP which leads to an opening of the cation channel. May be responsible for cAMP-induced calcium entry in cells and thus should be involved in the calcium signal transduction. Could transport K(+), Na(+) and Pb(2+). The sequence is that of Cyclic nucleotide-gated ion channel 1 (CNGC1) from Arabidopsis thaliana (Mouse-ear cress).